Here is a 169-residue protein sequence, read N- to C-terminus: Putative adenylate kinase (169 aa).

5 residues coordinate ATP: Gly10, Gly12, Lys13, Thr14, and Thr15. The interval 28–51 (HLNDLVGTEGLYDGVDADRGSKIV) is NMP. The LID stretch occupies residues 98 to 108 (DRGDSPEKAAE). Arg99 is an ATP binding site.

Belongs to the adenylate kinase family. AK6 subfamily. Interacts with uS11. Not a structural component of 40S pre-ribosomes, but transiently interacts with them by binding to uS11.

The catalysed reaction is AMP + ATP = 2 ADP. It catalyses the reaction ATP + H2O = ADP + phosphate + H(+). Broad-specificity nucleoside monophosphate (NMP) kinase that catalyzes the reversible transfer of the terminal phosphate group between nucleoside triphosphates and monophosphates. Also has ATPase activity. Involved in the late maturation steps of the 30S ribosomal particles, specifically 16S rRNA maturation. While NMP activity is not required for ribosome maturation, ATPase activity is. Associates transiently with small ribosomal subunit protein uS11. ATP hydrolysis breaks the interaction with uS11. May temporarily remove uS11 from the ribosome to enable a conformational change of the ribosomal RNA that is needed for the final maturation step of the small ribosomal subunit. In Halobacterium salinarum (strain ATCC 29341 / DSM 671 / R1), this protein is Putative adenylate kinase.